An 84-amino-acid polypeptide reads, in one-letter code: MSRFCLLFVAFGFVLYFLHMEVTGKRTREDILKEAEQKGPEIKAMILENVQKCKTNCALHLKYEKCNELVPECCPKETPKCKSV.

A signal peptide spans 1–24 (MSRFCLLFVAFGFVLYFLHMEVTG).

This sequence belongs to the scoloptoxin-10 family. Post-translationally, contains 3 disulfide bonds. In terms of tissue distribution, expressed by the venom gland.

Its subcellular location is the secreted. The chain is U-scoloptoxin(10)-Er1a from Ethmostigmus rubripes (Giant centipede).